The following is a 252-amino-acid chain: MKSRIPVVLLACGSFNPITNMHLRMFEVARDHLHQTGMYQVIQGIISPVNDTYGKKDLAASHHRVAMARLALQTSDWIRVDPWESEQAQWMETVKVLRHHHSKLLRSPPQMEGPDHGKALFSTPAAVPELKLLCGADVLKTFQTPNLWKDAHIQEIVEKFGLVCVGRVGHDPKGYIAESPILRMHQHNIHLAKEPVQNEISATYIRRALGQGQSVKYLIPDAVITYIKDHGLYTKGSTWKGKSTQSTEGKTS.

NAD(+) contacts are provided by S14 and F15. The ATP site is built by H22 and K56. Positions 90, 93, 135, and 137 each coordinate NAD(+). K140 is a binding site for ATP. NAD(+) contacts are provided by L147, W148, R167, and N198. 203 to 206 (TYIR) serves as a coordination point for ATP.

This sequence belongs to the eukaryotic NMN adenylyltransferase family. Homotetramer. The cofactor is Mg(2+). As to expression, expressed in lung and spleen with lower levels in placenta and kidney.

The protein resides in the mitochondrion. The catalysed reaction is beta-nicotinamide D-ribonucleotide + ATP + H(+) = diphosphate + NAD(+). It carries out the reaction nicotinate beta-D-ribonucleotide + ATP + H(+) = deamido-NAD(+) + diphosphate. Its pathway is cofactor biosynthesis; NAD(+) biosynthesis; NAD(+) from nicotinamide D-ribonucleotide: step 1/1. It functions in the pathway cofactor biosynthesis; NAD(+) biosynthesis; deamido-NAD(+) from nicotinate D-ribonucleotide: step 1/1. With respect to regulation, activity is strongly inhibited by galotannin. Inhibited by P1-(adenosine-5')-P4-(nicotinic-acid-riboside-5')-tetraphosphate (Nap4AD). Functionally, catalyzes the formation of NAD(+) from nicotinamide mononucleotide (NMN) and ATP. Can also use the deamidated form; nicotinic acid mononucleotide (NaMN) as substrate with the same efficiency. Can use triazofurin monophosphate (TrMP) as substrate. Can also use GTP and ITP as nucleotide donors. Also catalyzes the reverse reaction, i.e. the pyrophosphorolytic cleavage of NAD(+). For the pyrophosphorolytic activity, can use NAD(+), NADH, NaAD, nicotinic acid adenine dinucleotide phosphate (NHD), nicotinamide guanine dinucleotide (NGD) as substrates. Fails to cleave phosphorylated dinucleotides NADP(+), NADPH and NaADP(+). Protects against axonal degeneration following injury. May be involved in the maintenance of axonal integrity. Also functions as a stress-response chaperone protein that prevents toxic aggregation of proteins; this function may be independent of its NAD(+) synthesis activity. This chain is Nicotinamide/nicotinic acid mononucleotide adenylyltransferase 3, found in Homo sapiens (Human).